The following is a 397-amino-acid chain: Elongation factor Tu (397 aa).

A tr-type G domain is found at 10 to 206 (KPHVNIGTIG…AVDQNIPEPQ (197 aa)). The G1 stretch occupies residues 19-26 (GHIDHGKT). 19–26 (GHIDHGKT) provides a ligand contact to GTP. Threonine 26 provides a ligand contact to Mg(2+). The interval 62 to 66 (GITIS) is G2. A G3 region spans residues 83-86 (DCPG). GTP is bound by residues 83-87 (DCPGH) and 138-141 (NKSD). Residues 138-141 (NKSD) are G4. A G5 region spans residues 176–178 (SAL).

This sequence belongs to the TRAFAC class translation factor GTPase superfamily. Classic translation factor GTPase family. EF-Tu/EF-1A subfamily. Monomer.

It localises to the cytoplasm. The catalysed reaction is GTP + H2O = GDP + phosphate + H(+). GTP hydrolase that promotes the GTP-dependent binding of aminoacyl-tRNA to the A-site of ribosomes during protein biosynthesis. The polypeptide is Elongation factor Tu (Thermobifida fusca (strain YX)).